We begin with the raw amino-acid sequence, 410 residues long: LL-diaminopimelate aminotransferase (410 aa).

2 residues coordinate substrate: Tyr15 and Gly42. Residues Tyr72, 108-109 (AK), Tyr132, Asn188, Tyr219, and 247-249 (SFS) each bind pyridoxal 5'-phosphate. Substrate contacts are provided by Lys109, Tyr132, and Asn188. At Lys250 the chain carries N6-(pyridoxal phosphate)lysine. The pyridoxal 5'-phosphate site is built by Arg258 and Asn293. Residues Asn293 and Arg389 each contribute to the substrate site.

Belongs to the class-I pyridoxal-phosphate-dependent aminotransferase family. LL-diaminopimelate aminotransferase subfamily. In terms of assembly, homodimer. Requires pyridoxal 5'-phosphate as cofactor.

It carries out the reaction (2S,6S)-2,6-diaminopimelate + 2-oxoglutarate = (S)-2,3,4,5-tetrahydrodipicolinate + L-glutamate + H2O + H(+). Its pathway is amino-acid biosynthesis; L-lysine biosynthesis via DAP pathway; LL-2,6-diaminopimelate from (S)-tetrahydrodipicolinate (aminotransferase route): step 1/1. Functionally, involved in the synthesis of meso-diaminopimelate (m-DAP or DL-DAP), required for both lysine and peptidoglycan biosynthesis. Catalyzes the direct conversion of tetrahydrodipicolinate to LL-diaminopimelate. In Bacteroides fragilis (strain YCH46), this protein is LL-diaminopimelate aminotransferase.